The sequence spans 480 residues: Proline--tRNA ligase (480 aa).

Belongs to the class-II aminoacyl-tRNA synthetase family. ProS type 3 subfamily. Homodimer.

It localises to the cytoplasm. The catalysed reaction is tRNA(Pro) + L-proline + ATP = L-prolyl-tRNA(Pro) + AMP + diphosphate. Catalyzes the attachment of proline to tRNA(Pro) in a two-step reaction: proline is first activated by ATP to form Pro-AMP and then transferred to the acceptor end of tRNA(Pro). The protein is Proline--tRNA ligase of Chloroflexus aggregans (strain MD-66 / DSM 9485).